We begin with the raw amino-acid sequence, 895 residues long: Tiger protein D1 (895 aa).

Positions 1 to 21 are cleaved as a signal peptide; sequence MIHKMYFFLILLFSLFIIVYS. Topologically, residues 22–861 are extracellular; the sequence is APNRVTRNET…ERKSSKLSGG (840 aa). Asn-29, Asn-52, Asn-171, Asn-181, Asn-253, Asn-257, Asn-277, Asn-288, Asn-351, Asn-368, Asn-407, Asn-428, Asn-451, Asn-481, Asn-507, Asn-521, Asn-573, Asn-583, Asn-593, Asn-623, Asn-652, Asn-685, Asn-720, Asn-757, Asn-766, Asn-780, and Asn-799 each carry an N-linked (GlcNAc...) asparagine glycan. The IPT/TIG 1 domain maps to 295–381; that stretch reads AVISSISSVS…SGSDAVTFTY (87 aa). IPT/TIG domains lie at 560-638 and 642-725; these read PKVE…SFYL and PVIY…TLTY. A helical membrane pass occupies residues 862-882; it reads AIAGITIGCVAGAGALVGSVF. The Cytoplasmic portion of the chain corresponds to 883–895; sequence YFKLITRVKKAFN.

It localises to the cell membrane. Functionally, may be involved in the regulation of aggregation. Activates tgrC1. The sequence is that of Tiger protein D1 (tgrD1) from Dictyostelium discoideum (Social amoeba).